A 342-amino-acid polypeptide reads, in one-letter code: Ribosomal RNA small subunit methyltransferase C (342 aa).

The protein belongs to the methyltransferase superfamily. RsmC family. As to quaternary structure, monomer.

It localises to the cytoplasm. The catalysed reaction is guanosine(1207) in 16S rRNA + S-adenosyl-L-methionine = N(2)-methylguanosine(1207) in 16S rRNA + S-adenosyl-L-homocysteine + H(+). Its function is as follows. Specifically methylates the guanine in position 1207 of 16S rRNA in the 30S particle. This Salmonella gallinarum (strain 287/91 / NCTC 13346) protein is Ribosomal RNA small subunit methyltransferase C.